Reading from the N-terminus, the 336-residue chain is Cycloartenol-C-24-methyltransferase (336 aa).

Met-1 bears the N-acetylmethionine mark.

This sequence belongs to the class I-like SAM-binding methyltransferase superfamily. Erg6/SMT family. As to expression, highly expressed in vascular tissue, mature leaves and in regions undergoing cellular expansion.

It carries out the reaction cycloartenol + S-adenosyl-L-methionine = 24-methylenecycloartanol + S-adenosyl-L-homocysteine + H(+). It participates in steroid biosynthesis; sterol biosynthesis. Functionally, catalyzes the methyl transfer from S-adenosyl-methionine to the C-24 of cycloartenol to form 24-methylene cycloartenol. This chain is Cycloartenol-C-24-methyltransferase (SMT1), found in Arabidopsis thaliana (Mouse-ear cress).